We begin with the raw amino-acid sequence, 218 residues long: MPIDFRMTKKGLILLIESYSSIESLKQEIMAKFNEARDFFSEGDEISLMLTQETSKPDDIVNIVSLLGNLGVRVKDILVGSLEKKNVKIGQKYDLVREKVTEVRGAQVIKRNLRSGQIVVHNYDIIVFGNVHPGAEIIAGGSIVIFGTARGILRAGYSVGDEAVIAALDLKPSLIQISGLISQDYNVYETPAVAHIRTGRIVVEKIESAKFEVKGGKI.

This sequence belongs to the MinC family. Interacts with MinD and FtsZ.

Functionally, cell division inhibitor that blocks the formation of polar Z ring septums. Rapidly oscillates between the poles of the cell to destabilize FtsZ filaments that have formed before they mature into polar Z rings. Prevents FtsZ polymerization. This is Probable septum site-determining protein MinC from Kosmotoga olearia (strain ATCC BAA-1733 / DSM 21960 / TBF 19.5.1).